The chain runs to 104 residues: SPbeta prophage-derived stress response protein SCP1 (104 aa).

The protein localises to the cytoplasm. The polypeptide is SPbeta prophage-derived stress response protein SCP1 (yorD) (Bacillus subtilis (strain 168)).